The following is a 436-amino-acid chain: Transcription factor Sox-10 (436 aa).

5 disordered regions span residues 1-55 (MSDD…ERFP), 145-183 (RLRM…AEGG), 195-257 (HLDH…DFGN), 322-346 (PQTD…QPST), and 413-436 (SPSV…LSRP). Lys44 participates in a covalent cross-link: Glycyl lysine isopeptide (Lys-Gly) (interchain with G-Cter in SUMO). The dimerization (DIM) stretch occupies residues 48 to 88 (DSEDERFPVCIREAVSQVLSGYDWTLVPMPVRVNGGSKSKP). Positions 90-158 (VKRPMNAFMV…QHKKDHPDYK (69 aa)) form a DNA-binding region, HMG box. Residues 145 to 159 (RLRMQHKKDHPDYKY) show a composition bias toward basic and acidic residues. Polar residues-rich tracts occupy residues 205–215 (SDGNSEHSAGQ) and 331–346 (KTES…QPST). The segment at 209–295 (SEHSAGQSHG…NGHAGHPSHI (87 aa)) is transactivation domain (TAM). Residues 327-436 (KAQVKTESSS…QPVYTTLSRP (110 aa)) are transactivation domain (TAC). Lys331 participates in a covalent cross-link: Glycyl lysine isopeptide (Lys-Gly) (interchain with G-Cter in SUMO).

As to quaternary structure, interacts with the sumoylation factors ube2i/ubc9 and sumo1. In terms of processing, sumoylated.

The protein resides in the cytoplasm. It is found in the nucleus. In terms of biological role, acts early in neural crest formation, functioning redundantly with the other group E Sox factors sox8 and sox9 to induce neural crest progenitors. Acts downstream of wnt-signaling at the neural plate border. Involved in the specification of neural crest progenitors fated to form the pigment cell lineage. This Xenopus tropicalis (Western clawed frog) protein is Transcription factor Sox-10.